The chain runs to 874 residues: MDSRLALATEEPIKKDSLKKYKILCVVLLALLVIVSLGLGLGLGLRKPEEQGSCRKKCFDSSHRGLEGCRCDSGCTGRGDCCWDFEDTCVKSTQIWTCNLFRCGENRLETALCSCADDCLQRKDCCADYKTVCQGESPWVTEACASSQEPQCPPGFDLPPVILFSMDGFRAEYLQTWSTLLPNINKLKTCGIHSKYMRAMYPTKTFPNHYTIVTGLYPESHGIIDNNMYDVHLNKNFSLSSVEKSNPAWWSGQPIWLTAMYQGLKAACYYWPGSDVAVNGSFPTIYRNYSNSVPYERRITTLLQWLDLPKADRPSFYTIYVEEPDSAGHSSGPVSAGVIKALQSVDNAFGMLMEGLKQRNLHNCVNIIVLADHGMDQTSCDRVEYMTDYFPKINFYMYQGPAPRIRTRNIPQDFFTFNSEEIVRNLSCRKPDQHFKPYLTPDLPKRLHYAKNVRIDKAHLMVDRQWLAFRSKGSSNCGGGTHGYNNEFKSMEAIFLAHGPSFIEKTVIEPFENIEVYNLLCDLLHIEPAPNNGTHGSLNHLLKTPFYKPSHAGELSTPADCGFTTPLPTDPLDCSCPALQNTPGLEEQANQRLNLSEGEVAATVKANLPFGRPRVMQKNGDHCLLYHRDYISGYGKAMKMPMWSSYTVLKPGDTSSLPPTVPDCLRADVRVAPSESQKCSFYLADKNITHGFLYPAIKGTNESRYDALITSNLVPMYKEFKKMWDYFHEVLLIKYAIERNGLNVVSGPIFDYNYDGHFDAPDEITQYVAGTDVPIPTHYFVVLTSCKDQTHTPDSCPGWLDVLPFIVPHRPTNIESCSENKTEDLWVEERFQAHAARVRDVELLTGLDFYQEKAQPVSQILQLKTYLPTFETII.

Topologically, residues 1–11 (MDSRLALATEE) are cytoplasmic. Residues 12 to 30 (PIKKDSLKKYKILCVVLLA) traverse the membrane as a helical; Signal-anchor for type II membrane protein segment. Topologically, residues 31–874 (LLVIVSLGLG…TYLPTFETII (844 aa)) are extracellular. SMB domains lie at 51–93 (QGSC…VKST) and 94–138 (QIWT…GESP). 13 disulfide bridges follow: C54/C58, C54/C71, C58/C89, C69/C71, C69/C82, C75/C81, C82/C89, C98/C115, C103/C133, C113/C126, C119/C125, C144/C190, and C152/C364. The short motif at 78–80 (RGD) is the Cell attachment site element. The phosphodiesterase stretch occupies residues 160 to 544 (PVILFSMDGF…HGSLNHLLKT (385 aa)). D167 is a binding site for Zn(2+). ATP is bound at residue K204. T205 provides a ligand contact to Zn(2+). T205 serves as the catalytic Nucleophile. N226 is a binding site for ATP. N236 carries N-linked (GlcNAc...) asparagine glycosylation. Residue D275 participates in ATP binding. N-linked (GlcNAc...) asparagine glycosylation is found at N279 and N288. Y289 lines the ATP pocket. 4 residues coordinate Zn(2+): D325, H329, D372, and H373. 6 cysteine pairs are disulfide-bonded: C380–C477, C428–C817, C561–C623, C574–C679, C576–C664, and C786–C796. N-linked (GlcNAc...) asparagine glycosylation is present at N425. A Zn(2+)-binding site is contributed by H482. N-linked (GlcNAc...) asparagine glycosylation is found at N532, N594, N687, and N701. Residues 581–874 (NTPGLEEQAN…TYLPTFETII (294 aa)) are nuclease. Ca(2+) is bound by residues D751, N753, D755, H757, and D759. A glycan (N-linked (GlcNAc...) asparagine) is linked at N820.

Monomer and homodimer. Zn(2+) is required as a cofactor. In terms of processing, N-glycosylated. N-glycosylation is necessary for normal transport to the cell membrane, but is not the apical targeting signal. In terms of tissue distribution, detected at the tip of villi in the small intestine. Detected on basophils and mast cells (at protein level). Detected in the epithelial layer of the small intestine; expression is higher in the proximal part and lower in the distal part of the small intestine.

It is found in the cell membrane. The protein resides in the apical cell membrane. Its subcellular location is the secreted. It catalyses the reaction a ribonucleoside 5'-triphosphate + H2O = a ribonucleoside 5'-phosphate + diphosphate + H(+). It carries out the reaction UDP-N-acetyl-alpha-D-glucosamine + H2O = N-acetyl-alpha-D-glucosamine 1-phosphate + UMP + 2 H(+). The catalysed reaction is ATP + H2O = AMP + diphosphate + H(+). The enzyme catalyses CTP + H2O = CMP + diphosphate + H(+). It catalyses the reaction GTP + H2O = GMP + diphosphate + H(+). It carries out the reaction UTP + H2O = UMP + diphosphate + H(+). The catalysed reaction is Hydrolytically removes 5'-nucleotides successively from the 3'-hydroxy termini of 3'-hydroxy-terminated oligonucleotides.. The enzyme catalyses P(1),P(3)-bis(5'-adenosyl) triphosphate + H2O = AMP + ADP + 2 H(+). It catalyses the reaction P(1),P(4)-bis(5'-adenosyl) tetraphosphate + H2O = AMP + ATP + 2 H(+). It carries out the reaction P(1),P(5)-bis(5'-adenosyl) pentaphosphate + H2O = adenosine 5'-tetraphosphate + AMP + 2 H(+). The catalysed reaction is P(1),P(4)-bis(5'-guanosyl) tetraphosphate + H2O = GMP + GTP + 2 H(+). Its function is as follows. Hydrolase that metabolizes extracellular nucleotides, including ATP, GTP, UTP and CTP. Limits mast cells and basophils response during inflammation and during the chronic phases of allergic responses by eliminating extracellular ATP, a signaling molecule activating these cells in an autocrine manner. Metabolizes extracellular ATP in the lumen of the small intestine, and thereby prevents ATP-induced apoptosis of intestinal plasmacytoid dendritic cells. Has a broad specificity and can also hydrolyze UDP-GlcNAc into UMP and GlcNAc-1-phosphate and potentially several other intracellular nucleotide sugars, including UDP-GalNAc, CMP-NeuAc, GDP-Fuc, and UDP-GlcA. Thereby, could modulate glycan biosynthesis and protein glycosylation. Can hydrolyze extracellular dinucleoside polyphosphates, including the vasoactive adenosine polyphosphates as well. In addition, displays an alkaline phosphodiesterase activity in vitro. The chain is Ectonucleotide pyrophosphatase/phosphodiesterase family member 3 from Mus musculus (Mouse).